Consider the following 278-residue polypeptide: Large ribosomal subunit protein uL2 (278 aa).

The segment at 222–278 (GVVMNPIDHPHGGGEGRTSGGRHPVTPWGKPTKGKKTRSNKSTDKFILISRHKRKKK) is disordered.

It belongs to the universal ribosomal protein uL2 family. As to quaternary structure, part of the 50S ribosomal subunit. Forms a bridge to the 30S subunit in the 70S ribosome.

In terms of biological role, one of the primary rRNA binding proteins. Required for association of the 30S and 50S subunits to form the 70S ribosome, for tRNA binding and peptide bond formation. It has been suggested to have peptidyltransferase activity; this is somewhat controversial. Makes several contacts with the 16S rRNA in the 70S ribosome. The polypeptide is Large ribosomal subunit protein uL2 (Rhodopseudomonas palustris (strain BisB5)).